The chain runs to 248 residues: NAD(P)H-quinone oxidoreductase subunit K 1 (248 aa).

Residues 1–2 constitute a propeptide that is removed on maturation; it reads MS. [4Fe-4S] cluster contacts are provided by cysteine 62, cysteine 63, cysteine 127, and cysteine 158. The interval 228-248 is disordered; sequence MGMPVPPALTTSQQKEQLNRG. The segment covering 236 to 248 has biased composition (polar residues); the sequence is LTTSQQKEQLNRG.

It belongs to the complex I 20 kDa subunit family. In terms of assembly, NDH-1 can be composed of about 15 different subunits; different subcomplexes with different compositions have been identified which probably have different functions. The cofactor is [4Fe-4S] cluster.

Its subcellular location is the cellular thylakoid membrane. It carries out the reaction a plastoquinone + NADH + (n+1) H(+)(in) = a plastoquinol + NAD(+) + n H(+)(out). It catalyses the reaction a plastoquinone + NADPH + (n+1) H(+)(in) = a plastoquinol + NADP(+) + n H(+)(out). NDH-1 shuttles electrons from an unknown electron donor, via FMN and iron-sulfur (Fe-S) centers, to quinones in the respiratory and/or the photosynthetic chain. The immediate electron acceptor for the enzyme in this species is believed to be plastoquinone. Couples the redox reaction to proton translocation, and thus conserves the redox energy in a proton gradient. Cyanobacterial NDH-1 also plays a role in inorganic carbon-concentration. In Synechocystis sp. (strain ATCC 27184 / PCC 6803 / Kazusa), this protein is NAD(P)H-quinone oxidoreductase subunit K 1.